Reading from the N-terminus, the 622-residue chain is 1,4-alpha-glucan branching enzyme GlgB (622 aa).

The active-site Nucleophile is D306. The active-site Proton donor is E358. The interval 581 to 606 (YGGSNVGNRGAVHSDPVEKHGHSHSL) is disordered.

It belongs to the glycosyl hydrolase 13 family. GlgB subfamily. As to quaternary structure, monomer.

It carries out the reaction Transfers a segment of a (1-&gt;4)-alpha-D-glucan chain to a primary hydroxy group in a similar glucan chain.. It functions in the pathway glycan biosynthesis; glycogen biosynthesis. Catalyzes the formation of the alpha-1,6-glucosidic linkages in glycogen by scission of a 1,4-alpha-linked oligosaccharide from growing alpha-1,4-glucan chains and the subsequent attachment of the oligosaccharide to the alpha-1,6 position. The chain is 1,4-alpha-glucan branching enzyme GlgB from Salinibacter ruber (strain DSM 13855 / M31).